The following is a 462-amino-acid chain: A-type ATP synthase subunit B (462 aa).

The protein belongs to the ATPase alpha/beta chains family. As to quaternary structure, has multiple subunits with at least A(3), B(3), C, D, E, F, H, I and proteolipid K(x).

Its subcellular location is the cell membrane. Functionally, component of the A-type ATP synthase that produces ATP from ADP in the presence of a proton gradient across the membrane. The B chain is a regulatory subunit. The chain is A-type ATP synthase subunit B from Methanobrevibacter smithii (strain ATCC 35061 / DSM 861 / OCM 144 / PS).